The following is a 101-amino-acid chain: Putative defensin-like protein 253 (101 aa).

The N-terminal stretch at 1 to 23 (MRFASLFVVYCTFMFLDISHVKC) is a signal peptide. Intrachain disulfides connect Cys-31–Cys-84, Cys-41–Cys-66, Cys-49–Cys-76, and Cys-64–Cys-78.

This sequence belongs to the DEFL family.

The protein localises to the secreted. This is Putative defensin-like protein 253 (SCRL15) from Arabidopsis thaliana (Mouse-ear cress).